A 372-amino-acid chain; its full sequence is Putative aminopeptidase SgcX (372 aa).

The a divalent metal cation site is built by His-67 and Asp-180. Glu-212 acts as the Proton acceptor in catalysis. The a divalent metal cation site is built by Glu-213, Asp-235, and His-329.

The protein belongs to the peptidase M42 family. A divalent metal cation is required as a cofactor.

In Salmonella typhi, this protein is Putative aminopeptidase SgcX (sgcX).